Reading from the N-terminus, the 123-residue chain is Ribosome-binding factor A (123 aa).

Belongs to the RbfA family. In terms of assembly, monomer. Binds 30S ribosomal subunits, but not 50S ribosomal subunits or 70S ribosomes.

It localises to the cytoplasm. In terms of biological role, one of several proteins that assist in the late maturation steps of the functional core of the 30S ribosomal subunit. Associates with free 30S ribosomal subunits (but not with 30S subunits that are part of 70S ribosomes or polysomes). Required for efficient processing of 16S rRNA. May interact with the 5'-terminal helix region of 16S rRNA. The sequence is that of Ribosome-binding factor A from Neisseria gonorrhoeae (strain ATCC 700825 / FA 1090).